A 279-amino-acid chain; its full sequence is Large ribosomal subunit protein uL3 (279 aa).

Residue Gln-151 is modified to N5-methylglutamine.

Belongs to the universal ribosomal protein uL3 family. In terms of assembly, part of the 50S ribosomal subunit. Forms a cluster with proteins L14 and L19. Post-translationally, methylated by PrmB.

In terms of biological role, one of the primary rRNA binding proteins, it binds directly near the 3'-end of the 23S rRNA, where it nucleates assembly of the 50S subunit. This chain is Large ribosomal subunit protein uL3, found in Dinoroseobacter shibae (strain DSM 16493 / NCIMB 14021 / DFL 12).